Reading from the N-terminus, the 371-residue chain is MKPHVVVGMSGGVDSSVTALLLLRQGYRVSGLFMKNWEEDDGTEYCTAAQDFADAKQVCERLGVELHTVNFAAEYWDEVFEVFLSEYRAGRTPNPDILCNKQIKFRAFLDYAEDLGADLIAMGHYARVAEEEGRLQLLKGCDPGKDQSYFLYTLQQEQLARTLFPLGGLRKTEVRALAAGAGFANDAKKDSTGICFIGERRFKDFLARYLPARPGDIRTPEGVLLGRHDGLMYYTLGQRSGLGIGGTRAGGQEPWYVLDKDLARNVLVVGQGHDHPLLYRDGLLASRLHWVDGAGPAPGEILRCAAKTRYRQSDQDCRIRLIGEDRLEVVFAQPQRAVTPGQSVVFYQDDCCLGGGVIDLTFNADSRADAA.

Residues 8–15 and Met34 each bind ATP; that span reads GMSGGVDS. Residues 94-96 form an interaction with target base in tRNA region; sequence NPD. The active-site Nucleophile is Cys99. A disulfide bridge connects residues Cys99 and Cys195. Gly123 provides a ligand contact to ATP. The interval 145 to 147 is interaction with tRNA; that stretch reads KDQ. The active-site Cysteine persulfide intermediate is Cys195. Positions 309-310 are interaction with tRNA; the sequence is RY.

Belongs to the MnmA/TRMU family.

The protein resides in the cytoplasm. The catalysed reaction is S-sulfanyl-L-cysteinyl-[protein] + uridine(34) in tRNA + AH2 + ATP = 2-thiouridine(34) in tRNA + L-cysteinyl-[protein] + A + AMP + diphosphate + H(+). Functionally, catalyzes the 2-thiolation of uridine at the wobble position (U34) of tRNA, leading to the formation of s(2)U34. This Methylococcus capsulatus (strain ATCC 33009 / NCIMB 11132 / Bath) protein is tRNA-specific 2-thiouridylase MnmA.